The primary structure comprises 343 residues: GDSL esterase/lipase EXL4 (343 aa).

The signal sequence occupies residues Met-1–Ala-21. An N-linked (GlcNAc...) asparagine glycan is attached at Asn-23. Ser-35 acts as the Nucleophile in catalysis. Catalysis depends on residues Asp-318 and His-321.

The protein belongs to the 'GDSL' lipolytic enzyme family. As to expression, flower buds and pollen.

Its subcellular location is the secreted. It localises to the extracellular space. The protein localises to the extracellular matrix. The protein resides in the pollen coat. In terms of biological role, required for the formation of pollen coats and male fertility. This chain is GDSL esterase/lipase EXL4 (EXL4), found in Arabidopsis thaliana (Mouse-ear cress).